The chain runs to 224 residues: Response regulator protein GraR (224 aa).

The Response regulatory domain occupies 2–115; sequence QVLLVEDDQT…VLIAKLQAIY (114 aa). Asp51 carries the post-translational modification 4-aspartylphosphate. The segment at residues 126–224 is a DNA-binding region (ompR/PhoB-type); sequence KRTLNWQDAL…KVGKGYMAHE (99 aa).

Post-translationally, phosphorylated by GraS.

It localises to the cytoplasm. In terms of biological role, member of the two-component regulatory system GraR/GraS involved in resistance against cationic antimicrobial peptides (CAMPs). This chain is Response regulator protein GraR (graR), found in Staphylococcus haemolyticus (strain JCSC1435).